Consider the following 665-residue polypeptide: Ribonuclease R 2 (665 aa).

The RNB domain maps to 202 to 528; that stretch reads REDYRNEITY…LIIHRLLHLY (327 aa). The S1 motif domain occupies 579 to 662; the sequence is GEVYTGTITG…RKGTVDFEQI (84 aa).

It belongs to the RNR ribonuclease family. RNase R subfamily.

The protein localises to the cytoplasm. The catalysed reaction is Exonucleolytic cleavage in the 3'- to 5'-direction to yield nucleoside 5'-phosphates.. 3'-5' exoribonuclease that releases 5'-nucleoside monophosphates and is involved in maturation of structured RNAs. In Lactococcus lactis subsp. lactis (strain IL1403) (Streptococcus lactis), this protein is Ribonuclease R 2.